Reading from the N-terminus, the 431-residue chain is Enolase (431 aa).

Position 168 (glutamine 168) interacts with (2R)-2-phosphoglycerate. The Proton donor role is filled by glutamate 210. Mg(2+) is bound by residues aspartate 247, glutamate 291, and aspartate 318. 4 residues coordinate (2R)-2-phosphoglycerate: lysine 343, arginine 372, serine 373, and lysine 394. Lysine 343 acts as the Proton acceptor in catalysis.

The protein belongs to the enolase family. Component of the RNA degradosome, a multiprotein complex involved in RNA processing and mRNA degradation. Mg(2+) is required as a cofactor.

The protein resides in the cytoplasm. Its subcellular location is the secreted. It localises to the cell surface. It catalyses the reaction (2R)-2-phosphoglycerate = phosphoenolpyruvate + H2O. It functions in the pathway carbohydrate degradation; glycolysis; pyruvate from D-glyceraldehyde 3-phosphate: step 4/5. In terms of biological role, catalyzes the reversible conversion of 2-phosphoglycerate (2-PG) into phosphoenolpyruvate (PEP). It is essential for the degradation of carbohydrates via glycolysis. This chain is Enolase, found in Acinetobacter baylyi (strain ATCC 33305 / BD413 / ADP1).